Consider the following 787-residue polypeptide: MVDFAKSLFGFGNYKKESSSQSPTPPPSAHSSQEQHHKSNTEEYPQSHLSQQQHSHRYQPPHMSEQSHQFPQQQQQQQQSGTNKFFPKTLVSAAPTTAVANHSSVYGTTSTTTNNYPEAYLNQTFKNNIYNPQQQQQQQAQQPPPEQQQSSAPYQNSANIQQPYGNQWGSSQDQDANIITIDKTGNKLSPASRDSPIKGKLKVTILEAKDIFATQPYVVCSFESSEFVTNAPDSYGKSPVSSFGHNNNQGHNGPRNMYNSNHGPSPKALPMKNSGNLFGQRPSMYQRQLSTPHLNLPNDSSNPIWNHDTIFDVVGSKSELDISVYDGARDDAFLGHVRISPSTDKNNKNESEWLQLGARITGETVSSGHIKIKWEYTSFDNNIKRSYGPDDFHFLRLLGKGTFGQVFQVRKKDTNRVYAMKILSKKVIVKKKEIAHTIGERNILVRTSAASSPFIVGLKFSFQTPSDLFLVTDFMSGGELFFHLQKEGRFNEDRSKFYTAELILALEHLHDNDIVYRDLKPENILLDANGHIALCDFGLSKADLNMDGTTNTFCGTTEYLAPEVLLDEQGYTKMVDFWSLGVLIFEMTCGWSPFHAENTQQMYKNIAFGKVRFPKDVLSPEGRSFVKGLLNRNPKHRLGATDDARELKAHPFFADIDWDLLRAKNIPPPFKPHIVSETDISNFDTEFTSENTSALKRQMEMATTPLSPGIQANFKGFTYVDDSTMDDHFARSYRANAFRPPGSFIPGDPNLPPDEEVLAEQIEEEDEMEVDEDQHMDDEFVNGRFDL.

Disordered regions lie at residues 1 to 82, 132 to 172, and 238 to 280; these read MVDF…QSGT, PQQQ…GSSQ, and SPVS…LFGQ. Low complexity predominate over residues 132 to 155; the sequence is PQQQQQQQAQQPPPEQQQSSAPYQ. Polar residues-rich tracts occupy residues 156–172 and 239–263; these read NSAN…GSSQ and PVSS…SNHG. In terms of domain architecture, C2 spans 182-354; the sequence is DKTGNKLSPA…KNNKNESEWL (173 aa). Residues 392 to 653 form the Protein kinase domain; that stretch reads FHFLRLLGKG…ARELKAHPFF (262 aa). ATP contacts are provided by residues 398–406 and lysine 421; that span reads LGKGTFGQV. Aspartate 518 acts as the Proton acceptor in catalysis. An AGC-kinase C-terminal domain is found at 654–729; it reads ADIDWDLLRA…VDDSTMDDHF (76 aa).

The protein belongs to the protein kinase superfamily. AGC Ser/Thr protein kinase family. cAMP subfamily.

It catalyses the reaction L-seryl-[protein] + ATP = O-phospho-L-seryl-[protein] + ADP + H(+). The enzyme catalyses L-threonyl-[protein] + ATP = O-phospho-L-threonyl-[protein] + ADP + H(+). Protein kinase that is part of growth control pathway which is at least partially redundant with the cAMP pathway. Plays a role in filamentous growth and virulence. Prevents hypha formation specifically under hypoxia at high CO(2) levels. Required for chlamydospore formation, distinctive morphological feature of the fungal pathogen C.albicans that can be induced to form in oxygen-limited environments and has been reported in clinical specimens. This Candida albicans (strain SC5314 / ATCC MYA-2876) (Yeast) protein is Serine/threonine-protein kinase SCH9 (SCH9).